Reading from the N-terminus, the 205-residue chain is Holliday junction resolvase RecU (205 aa).

Residues 1 to 26 (MIRYPNGKSYQPIQPIGTKKRISGES) form a disordered region. 4 residues coordinate Mg(2+): Thr-86, Asp-88, Glu-101, and Gln-120.

Belongs to the RecU family. Mg(2+) is required as a cofactor.

The protein resides in the cytoplasm. The catalysed reaction is Endonucleolytic cleavage at a junction such as a reciprocal single-stranded crossover between two homologous DNA duplexes (Holliday junction).. Functionally, endonuclease that resolves Holliday junction intermediates in genetic recombination. Cleaves mobile four-strand junctions by introducing symmetrical nicks in paired strands. Promotes annealing of linear ssDNA with homologous dsDNA. Required for DNA repair, homologous recombination and chromosome segregation. The sequence is that of Holliday junction resolvase RecU from Bacillus pumilus (strain SAFR-032).